A 63-amino-acid chain; its full sequence is Large ribosomal subunit protein uL29 (63 aa).

This sequence belongs to the universal ribosomal protein uL29 family.

The sequence is that of Large ribosomal subunit protein uL29 from Pelagibacter ubique (strain HTCC1062).